The sequence spans 416 residues: Multifunctional CCA protein (416 aa).

Residues Gly-8 and Arg-11 each contribute to the ATP site. Residues Gly-8 and Arg-11 each coordinate CTP. Mg(2+) is bound by residues Asp-21 and Asp-23. ATP contacts are provided by Arg-91, Arg-137, and Arg-140. Arg-91, Arg-137, and Arg-140 together coordinate CTP. Positions Thr-228–Trp-329 constitute an HD domain.

It belongs to the tRNA nucleotidyltransferase/poly(A) polymerase family. Bacterial CCA-adding enzyme type 1 subfamily. Monomer. Can also form homodimers and oligomers. Requires Mg(2+) as cofactor. It depends on Ni(2+) as a cofactor.

It carries out the reaction a tRNA precursor + 2 CTP + ATP = a tRNA with a 3' CCA end + 3 diphosphate. The catalysed reaction is a tRNA with a 3' CCA end + 2 CTP + ATP = a tRNA with a 3' CCACCA end + 3 diphosphate. Functionally, catalyzes the addition and repair of the essential 3'-terminal CCA sequence in tRNAs without using a nucleic acid template. Adds these three nucleotides in the order of C, C, and A to the tRNA nucleotide-73, using CTP and ATP as substrates and producing inorganic pyrophosphate. tRNA 3'-terminal CCA addition is required both for tRNA processing and repair. Also involved in tRNA surveillance by mediating tandem CCA addition to generate a CCACCA at the 3' terminus of unstable tRNAs. While stable tRNAs receive only 3'-terminal CCA, unstable tRNAs are marked with CCACCA and rapidly degraded. This Shewanella sp. (strain MR-4) protein is Multifunctional CCA protein.